The chain runs to 443 residues: Probable glycine dehydrogenase (decarboxylating) subunit 1 (443 aa).

Belongs to the GcvP family. N-terminal subunit subfamily. As to quaternary structure, the glycine cleavage system is composed of four proteins: P, T, L and H. In this organism, the P 'protein' is a heterodimer of two subunits.

The enzyme catalyses N(6)-[(R)-lipoyl]-L-lysyl-[glycine-cleavage complex H protein] + glycine + H(+) = N(6)-[(R)-S(8)-aminomethyldihydrolipoyl]-L-lysyl-[glycine-cleavage complex H protein] + CO2. Its function is as follows. The glycine cleavage system catalyzes the degradation of glycine. The P protein binds the alpha-amino group of glycine through its pyridoxal phosphate cofactor; CO(2) is released and the remaining methylamine moiety is then transferred to the lipoamide cofactor of the H protein. This chain is Probable glycine dehydrogenase (decarboxylating) subunit 1, found in Nitratidesulfovibrio vulgaris (strain ATCC 29579 / DSM 644 / CCUG 34227 / NCIMB 8303 / VKM B-1760 / Hildenborough) (Desulfovibrio vulgaris).